The chain runs to 491 residues: 3-octaprenyl-4-hydroxybenzoate carboxy-lyase (491 aa).

Residue Asn172 participates in Mn(2+) binding. Prenylated FMN contacts are provided by residues 175–177 (IYR), 189–191 (RWL), and 194–195 (RG). Glu238 contributes to the Mn(2+) binding site. The active-site Proton donor is Asp287.

This sequence belongs to the UbiD family. In terms of assembly, homohexamer. Prenylated FMN serves as cofactor. It depends on Mn(2+) as a cofactor.

It is found in the cell membrane. The enzyme catalyses a 4-hydroxy-3-(all-trans-polyprenyl)benzoate + H(+) = a 2-(all-trans-polyprenyl)phenol + CO2. Its pathway is cofactor biosynthesis; ubiquinone biosynthesis. Functionally, catalyzes the decarboxylation of 3-octaprenyl-4-hydroxy benzoate to 2-octaprenylphenol, an intermediate step in ubiquinone biosynthesis. This chain is 3-octaprenyl-4-hydroxybenzoate carboxy-lyase, found in Alcanivorax borkumensis (strain ATCC 700651 / DSM 11573 / NCIMB 13689 / SK2).